Consider the following 114-residue polypeptide: Flagellar hook-basal body complex protein FliE (114 aa).

It belongs to the FliE family.

The protein localises to the bacterial flagellum basal body. This Burkholderia lata (strain ATCC 17760 / DSM 23089 / LMG 22485 / NCIMB 9086 / R18194 / 383) protein is Flagellar hook-basal body complex protein FliE.